The sequence spans 145 residues: Large ribosomal subunit protein uL15 (145 aa).

The interval 1 to 50 (MRLNTLSPAAGSKPEKQRRGRGIGSGLGKTGGRGVKGQTSRSGGGKVRAG) is disordered. The segment covering 22–35 (GIGSGLGKTGGRGV) has biased composition (gly residues).

The protein belongs to the universal ribosomal protein uL15 family. As to quaternary structure, part of the 50S ribosomal subunit.

In terms of biological role, binds to the 23S rRNA. In Aeromonas salmonicida (strain A449), this protein is Large ribosomal subunit protein uL15.